Reading from the N-terminus, the 185-residue chain is uncharacterized protein (185 aa).

It belongs to the EUO family.

This is an uncharacterized protein from Chlamydia muridarum (strain MoPn / Nigg).